The following is a 756-amino-acid chain: Lysyl oxidase homolog 4 (756 aa).

The N-terminal stretch at 1-24 (MAWSPPATLFLFLLLLGQPPPSRP) is a signal peptide. SRCR domains are found at residues 32-133 (LRLV…VICH), 159-287 (VRLK…VSCV), 311-411 (VRLR…VRCN), and 421-529 (VRLA…VSCM). Disulfide bonds link Cys-58–Cys-122, Cys-71–Cys-132, Cys-102–Cys-112, Cys-191–Cys-276, Cys-204–Cys-286, Cys-251–Cys-261, Cys-336–Cys-400, Cys-349–Cys-410, Cys-380–Cys-390, Cys-450–Cys-515, Cys-463–Cys-528, Cys-497–Cys-507, Cys-558–Cys-564, Cys-610–Cys-658, Cys-642–Cys-648, Cys-670–Cys-680, and Cys-717–Cys-731. The N-linked (GlcNAc...) asparagine glycan is linked to Asn-198. Residues 533-736 (PDLVMNAQLV…WLHNCHTGNS (204 aa)) form a lysyl-oxidase like region. The Cu cation site is built by His-611, His-613, and His-615. Asn-629 is a glycosylation site (N-linked (GlcNAc...) asparagine). Positions 638-674 (KASFCLEDTNCPTGLQRRYACANFGEQGVTVGCWDTY) form a cross-link, lysine tyrosylquinone (Lys-Tyr). The residue at position 674 (Tyr-674) is a 2',4',5'-topaquinone.

This sequence belongs to the lysyl oxidase family. Requires Cu cation as cofactor. It depends on lysine tyrosylquinone residue as a cofactor. In terms of processing, the lysine tyrosylquinone cross-link (LTQ) is generated by condensation of the epsilon-amino group of a lysine with a topaquinone produced by oxidation of tyrosine. Post-translationally, may be proteolytically cleaved by BMP1. In terms of tissue distribution, expressed in many tissues, the highest levels among the tissues studied being in the skeletal muscle, testis and pancreas. Expressed in cartilage.

It is found in the secreted. Its subcellular location is the extracellular space. It carries out the reaction L-lysyl-[protein] + O2 + H2O = (S)-2-amino-6-oxohexanoyl-[protein] + H2O2 + NH4(+). Inhibited by beta-aminopropionitrile (BAPN). In terms of biological role, catalyzes the oxidative deamination of lysine and hydroxylysine residues in collagen and elastin, resulting in the formation of covalent cross-linkages, and the stabilization of collagen and elastin fibers. This chain is Lysyl oxidase homolog 4 (LOXL4), found in Homo sapiens (Human).